A 277-amino-acid chain; its full sequence is Shikimate dehydrogenase (NADP(+)) (277 aa).

Residues 15–17 and threonine 62 contribute to the shikimate site; that span reads SLS. Catalysis depends on lysine 66, which acts as the Proton acceptor. The shikimate site is built by asparagine 87 and aspartate 102. Residues 127 to 131, 151 to 156, and isoleucine 219 contribute to the NADP(+) site; these read GAGGA and NRTVDK. Tyrosine 221 lines the shikimate pocket. Glycine 242 contacts NADP(+).

It belongs to the shikimate dehydrogenase family. Homodimer.

It catalyses the reaction shikimate + NADP(+) = 3-dehydroshikimate + NADPH + H(+). It participates in metabolic intermediate biosynthesis; chorismate biosynthesis; chorismate from D-erythrose 4-phosphate and phosphoenolpyruvate: step 4/7. Its function is as follows. Involved in the biosynthesis of the chorismate, which leads to the biosynthesis of aromatic amino acids. Catalyzes the reversible NADPH linked reduction of 3-dehydroshikimate (DHSA) to yield shikimate (SA). This is Shikimate dehydrogenase (NADP(+)) from Bacillus cereus (strain AH187).